Here is a 114-residue protein sequence, read N- to C-terminus: Chaperone protein YscY (114 aa).

Binds to YscX.

It is found in the cytoplasm. Functionally, required for Yop secretion. Functions probably as a chaperone which stabilizes YscX within the cell, before its secretion. The sequence is that of Chaperone protein YscY (yscY) from Yersinia enterocolitica.